The chain runs to 363 residues: 3-dehydroquinate synthase (363 aa).

NAD(+) is bound by residues 72–77 (SGEKEK), 130–131 (TT), Lys-142, and Lys-151. Glu-184, His-247, and His-264 together coordinate Zn(2+).

This sequence belongs to the sugar phosphate cyclases superfamily. Dehydroquinate synthase family. Co(2+) is required as a cofactor. Requires Zn(2+) as cofactor. It depends on NAD(+) as a cofactor.

The protein resides in the cytoplasm. It carries out the reaction 7-phospho-2-dehydro-3-deoxy-D-arabino-heptonate = 3-dehydroquinate + phosphate. The protein operates within metabolic intermediate biosynthesis; chorismate biosynthesis; chorismate from D-erythrose 4-phosphate and phosphoenolpyruvate: step 2/7. In terms of biological role, catalyzes the conversion of 3-deoxy-D-arabino-heptulosonate 7-phosphate (DAHP) to dehydroquinate (DHQ). This chain is 3-dehydroquinate synthase, found in Bacillus thuringiensis (strain Al Hakam).